Consider the following 151-residue polypeptide: Brain ribonuclease (151 aa).

The segment at 1 to 25 is disordered; it reads KESAAAKFRRQHMDAGSSSSGNSNY. Residues lysine 7 and arginine 10 each contribute to the substrate site. Histidine 12 (proton acceptor) is an active-site residue. Intrachain disulfides connect cysteine 26–cysteine 84, cysteine 40–cysteine 95, cysteine 58–cysteine 110, and cysteine 65–cysteine 72. 41 to 45 is a substrate binding site; that stretch reads KPVNT. N-linked (GlcNAc...) asparagine glycosylation occurs at asparagine 62. Residues lysine 66 and arginine 85 each contribute to the substrate site. Residue histidine 119 is the Proton donor of the active site. A glycan (O-linked (GalNAc...) threonine) is linked at threonine 129. O-linked (GalNAc...) serine glycosylation occurs at serine 133.

This sequence belongs to the pancreatic ribonuclease family.

It localises to the secreted. This Axis porcinus (Hog deer) protein is Brain ribonuclease (BRN).